Reading from the N-terminus, the 349-residue chain is Phospho-N-acetylmuramoyl-pentapeptide-transferase (349 aa).

A run of 10 helical transmembrane segments spans residues 13–33 (LFFSLALTGMTTLVLTVSLGV), 69–89 (GGGVLLFISLIASLLVWLPWG), 91–111 (FSTWFFIILLTCYAGLGWYDD), 129–149 (FMVQIAIAAFTLIALPYIYGS), 165–185 (LSLPFWLGKVFCLGLALVAII), 197–217 (LDGLAAGTMSFAALGFIFVAL), 228–248 (VAYVLAALVGACIGFLWYNGF), 252–272 (LFMGDTGSLLLGGLLGSCAVM), 278–298 (ILVVIGGVFVAEAGSVILQVL), and 327–347 (IVMRFWIFSFVCAGLGIAAVL).

This sequence belongs to the glycosyltransferase 4 family. MraY subfamily. The cofactor is Mg(2+).

Its subcellular location is the cell inner membrane. The enzyme catalyses UDP-N-acetyl-alpha-D-muramoyl-L-alanyl-gamma-D-glutamyl-meso-2,6-diaminopimeloyl-D-alanyl-D-alanine + di-trans,octa-cis-undecaprenyl phosphate = di-trans,octa-cis-undecaprenyl diphospho-N-acetyl-alpha-D-muramoyl-L-alanyl-D-glutamyl-meso-2,6-diaminopimeloyl-D-alanyl-D-alanine + UMP. Its pathway is cell wall biogenesis; peptidoglycan biosynthesis. Its function is as follows. Catalyzes the initial step of the lipid cycle reactions in the biosynthesis of the cell wall peptidoglycan: transfers peptidoglycan precursor phospho-MurNAc-pentapeptide from UDP-MurNAc-pentapeptide onto the lipid carrier undecaprenyl phosphate, yielding undecaprenyl-pyrophosphoryl-MurNAc-pentapeptide, known as lipid I. In Chlamydia pneumoniae (Chlamydophila pneumoniae), this protein is Phospho-N-acetylmuramoyl-pentapeptide-transferase.